The chain runs to 716 residues: DNA ligase (716 aa).

NAD(+)-binding positions include Asp-42–Asp-46, Ser-91–Leu-92, and Glu-125. Lys-127 serves as the catalytic N6-AMP-lysine intermediate. Arg-148, Glu-184, Lys-300, and Lys-324 together coordinate NAD(+). Cys-429, Cys-432, Cys-447, and Cys-453 together coordinate Zn(2+). A BRCT domain is found at Thr-638–Gly-716.

The protein belongs to the NAD-dependent DNA ligase family. LigA subfamily. Mg(2+) serves as cofactor. Requires Mn(2+) as cofactor.

The enzyme catalyses NAD(+) + (deoxyribonucleotide)n-3'-hydroxyl + 5'-phospho-(deoxyribonucleotide)m = (deoxyribonucleotide)n+m + AMP + beta-nicotinamide D-nucleotide.. Its function is as follows. DNA ligase that catalyzes the formation of phosphodiester linkages between 5'-phosphoryl and 3'-hydroxyl groups in double-stranded DNA using NAD as a coenzyme and as the energy source for the reaction. It is essential for DNA replication and repair of damaged DNA. This Bartonella henselae (strain ATCC 49882 / DSM 28221 / CCUG 30454 / Houston 1) (Rochalimaea henselae) protein is DNA ligase.